We begin with the raw amino-acid sequence, 256 residues long: Trypsin epsilon (256 aa).

Positions 1-22 (MLKIAVLLSVLACALAGTIPDG) are cleaved as a signal peptide. The propeptide at 23–30 (LLPQLDGR) is activation peptide. A Peptidase S1 domain is found at 31–254 (IVGGYETSID…FHEWIERTAR (224 aa)). Residues Cys56 and Cys72 are joined by a disulfide bond. Catalysis depends on charge relay system residues His71 and Asp116. 2 cysteine pairs are disulfide-bonded: Cys180/Cys197 and Cys206/Cys230. The active-site Charge relay system is the Ser210.

Belongs to the peptidase S1 family.

It is found in the secreted. Its subcellular location is the extracellular space. It catalyses the reaction Preferential cleavage: Arg-|-Xaa, Lys-|-Xaa.. This chain is Trypsin epsilon (epsilonTry), found in Drosophila erecta (Fruit fly).